Consider the following 516-residue polypeptide: Signal recognition particle protein (516 aa).

GTP-binding positions include 108–115 (GLQGAGKT), 191–195 (DTAGR), and 249–252 (TKID). Positions 383 to 405 (MTPEERENPDLLTPSRRRRIASG) are disordered.

This sequence belongs to the GTP-binding SRP family. SRP54 subfamily. In terms of assembly, part of the signal recognition particle protein translocation system, which is composed of SRP and FtsY.

The protein localises to the cytoplasm. The enzyme catalyses GTP + H2O = GDP + phosphate + H(+). Involved in targeting and insertion of nascent membrane proteins into the cytoplasmic membrane. Binds to the hydrophobic signal sequence of the ribosome-nascent chain (RNC) as it emerges from the ribosomes. The SRP-RNC complex is then targeted to the cytoplasmic membrane where it interacts with the SRP receptor FtsY. In Streptococcus mutans serotype c (strain ATCC 700610 / UA159), this protein is Signal recognition particle protein.